The primary structure comprises 220 residues: MGFQIAIDGPAASGKSTVARLLAEKLGFDHLNTGATYRAVAVYLHEKGLSPSSAEEEIENALKNLKIDYVNGRVYINGKDYTEKIQSPEAGVLASNFARLEVVRRHLVRIQREICDDKNIVVEGRDIGTVVLPNAHLKIFLTASLEARVERKLKEYQKRGLKVTKEEVERELISRDEQDSKRNVAPLKPAEDAVIIDTTSMSVEEVLDRILKLVRERMNT.

9-17 (GPAASGKST) is a binding site for ATP.

Belongs to the cytidylate kinase family. Type 1 subfamily.

Its subcellular location is the cytoplasm. It carries out the reaction CMP + ATP = CDP + ADP. The catalysed reaction is dCMP + ATP = dCDP + ADP. The protein is Cytidylate kinase of Thermotoga sp. (strain RQ2).